Here is a 381-residue protein sequence, read N- to C-terminus: Chymosin (381 aa).

The N-terminal stretch at 1–16 is a signal peptide; it reads MRCLVVLLAVFALSQG. A propeptide spans 17 to 58 (activation peptide); the sequence is AEITRIPLYKGKSLRKALKEHGLLEDFLQKQQYGISSKYSGF. The Peptidase A1 domain occupies 74–378; the sequence is YFGKIYLGTP…DRANNLVGLA (305 aa). The active site involves Asp-92. 2 disulfides stabilise this stretch: Cys-105/Cys-110 and Cys-265/Cys-269. Asp-274 is an active-site residue. Cys-308 and Cys-341 are oxidised to a cystine.

The protein belongs to the peptidase A1 family. In terms of assembly, monomer.

The enzyme catalyses Broad specificity similar to that of pepsin A. Clots milk by cleavage of a single 104-Ser-Phe-|-Met-Ala-107 bond in kappa-chain of casein.. Its function is as follows. Chymosin is synthesized in the mucosa of the abomasum (fourth stomach) of young (unweaned) ruminants. The enzyme hydrolyzes casein to paracasein. This chain is Chymosin (CYM), found in Bos taurus (Bovine).